The chain runs to 150 residues: 3-hydroxyacyl-[acyl-carrier-protein] dehydratase FabZ (150 aa).

The active site involves His53.

Belongs to the thioester dehydratase family. FabZ subfamily.

It is found in the cytoplasm. The enzyme catalyses a (3R)-hydroxyacyl-[ACP] = a (2E)-enoyl-[ACP] + H2O. Its function is as follows. Involved in unsaturated fatty acids biosynthesis. Catalyzes the dehydration of short chain beta-hydroxyacyl-ACPs and long chain saturated and unsaturated beta-hydroxyacyl-ACPs. This Photorhabdus laumondii subsp. laumondii (strain DSM 15139 / CIP 105565 / TT01) (Photorhabdus luminescens subsp. laumondii) protein is 3-hydroxyacyl-[acyl-carrier-protein] dehydratase FabZ.